The chain runs to 124 residues: Small ribosomal subunit protein uS12 (124 aa).

3-methylthioaspartic acid is present on Asp89.

The protein belongs to the universal ribosomal protein uS12 family. As to quaternary structure, part of the 30S ribosomal subunit. Contacts proteins S8 and S17. May interact with IF1 in the 30S initiation complex.

With S4 and S5 plays an important role in translational accuracy. Functionally, interacts with and stabilizes bases of the 16S rRNA that are involved in tRNA selection in the A site and with the mRNA backbone. Located at the interface of the 30S and 50S subunits, it traverses the body of the 30S subunit contacting proteins on the other side and probably holding the rRNA structure together. The combined cluster of proteins S8, S12 and S17 appears to hold together the shoulder and platform of the 30S subunit. The sequence is that of Small ribosomal subunit protein uS12 from Shewanella putrefaciens (strain CN-32 / ATCC BAA-453).